Reading from the N-terminus, the 257-residue chain is Baramicin A1 (257 aa).

Positions Met-1 to Ala-19 are cleaved as a signal peptide. Positions Glu-20–Pro-21 are excised as a propeptide. Pyrrolidone carboxylic acid is present on Gln-22. Positions Gly-95–Gln-122 are disordered. N-linked (GlcNAc...) asparagine glycosylation occurs at Asn-97. The propeptide occupies Arg-118–Pro-121. Gln-122 carries the post-translational modification Pyrrolidone carboxylic acid. A propeptide spanning residues Arg-145–Pro-148 is cleaved from the precursor. Gln-149 carries the pyrrolidone carboxylic acid modification. Residues Arg-172–Pro-175 constitute a propeptide that is removed on maturation. Gln-176 carries the pyrrolidone carboxylic acid modification. The propeptide occupies Arg-199–Asp-204. An N-linked (GlcNAc...) asparagine glycan is attached at Asn-225.

Post-translationally, proteolytically cleaved. Hemolymph (at protein level).

It is found in the secreted. Secreted immune-induced peptides induced by Toll signaling. Has a significant role in resistance to infection by the entomopathogenic fungus B.bassiana R444 and weak antifungal activity against M.rileyi PHP1705. In adult males, activity appears to be important for neuromuscular processes that mediate correct wing posture upon Toll activation. This Drosophila melanogaster (Fruit fly) protein is Baramicin A1.